Consider the following 209-residue polypeptide: Large ribosomal subunit protein uL3 (209 aa).

Residues 128–152 (QARGPMSHGSRYHRRPGSMGPVDPN) are disordered.

The protein belongs to the universal ribosomal protein uL3 family. Part of the 50S ribosomal subunit. Forms a cluster with proteins L14 and L19.

In terms of biological role, one of the primary rRNA binding proteins, it binds directly near the 3'-end of the 23S rRNA, where it nucleates assembly of the 50S subunit. This is Large ribosomal subunit protein uL3 from Halalkalibacterium halodurans (strain ATCC BAA-125 / DSM 18197 / FERM 7344 / JCM 9153 / C-125) (Bacillus halodurans).